A 551-amino-acid chain; its full sequence is Cation/acetate symporter ActP (551 aa).

Helical transmembrane passes span 5–25, 34–54, 77–97, 104–124, 150–170, 184–204, 207–227, 263–283, 304–324, 356–376, 406–426, 430–450, 469–489, and 498–518; these read HWSALSLFVLPALAQAEALTG, IQAIVMFLLFVGGTLYITYWA, GLAIAGDYMSAASFLGISALV, GLIYSIGFLIGWPIILFLIAE, LSACGSLVVVALYLIAQMVGA, VAVVLVGILMVLYVLFGGMLA, WVQIIKAVMLLSGATFMAIMV, ISALSLGLALMFGTAGLPHIL, GFIGYFYILTFIIGFGAILLV, FFLGFISAVAFATILAVVAGL, VSKITVIILGIVAIGLGILFE, IAFMVGLAFSIAASCNFPIII, LGLSTAVILMILGPTIWVTIL, and YEYPALFSMIAAFVGTWFFSI.

It belongs to the sodium:solute symporter (SSF) (TC 2.A.21) family.

Its subcellular location is the cell inner membrane. Functionally, transports acetate. This Yersinia pestis bv. Antiqua (strain Antiqua) protein is Cation/acetate symporter ActP.